A 459-amino-acid polypeptide reads, in one-letter code: uncharacterized protein (459 aa).

Residues 28–47 (AHDEELTGPPQKPAYAAKPA) are disordered. An FAD-binding PCMH-type domain is found at 35–214 (GPPQKPAYAA…TEVIVKLHPR (180 aa)).

This sequence belongs to the oxygen-dependent FAD-linked oxidoreductase family. The cofactor is FAD.

This is an uncharacterized protein from Mycobacterium tuberculosis (strain CDC 1551 / Oshkosh).